Here is a 1362-residue protein sequence, read N- to C-terminus: MSAETGLGTRLRATSVMGDGVEGAQMSGQQQPAQPQPQTPMMQTPPPEIARPNQPKRQTNQLQYLLKTVLKTLWKHQFAWPFQVPVDVVKLNLPDYYKIIKTPMDMGTIKKRLENHFYWNAQECIQDFNTMFTNCYIYNKPGDDIVLMAEALEKLFLQKISEMPQEETELAVVQCKGRGRARKEQDASITPMRTRVLSGSLGDKSAVKPPVTPVSKPATPTPPAVIRAPTPPQTKPQQAHPPAITQAPISFSPIISQDVVVPTTVVPTPVPQPLANHPAVIHTAAQPAKTKKGVKRKADTTTPTTHDPLHESSPLPSDPKPPKAGPRKESGRQIRPIKKTEVPDSQLPAPPDLHPQPAPIAEKDSKTSEQLRYCAGIVREMFSKKHQAYAWPFYKPVDVETLGLHDYCEIIKHPMDLGTIKVKMENCDYKNAQDFASDVRLMFSNCYKYNPPDHEVVIMARKLQDVFEMRFAKMPDEPEEAPAPVPSPAPGPPAPSIKIPPPTSSDTSSDSSSDSESSSDSEEERAQRLAELQEQLKAVHEQLAALSQPQPNKPKKKEREKRKEKHKRKEEVEETRKGRIREPPAKKPKKSVQVSGGTPSIKKEAPPPVTRPARPAPPPAPCESSEEDTQRCRPMSYEEKRQLSLDINKLPGEKLGRVVHIIQSREPSLKNSNPDEIEIDFETLKPSTLRELERYVTSCLRKKRKPQDKIEAPTSGIVKVKSYSSSESESSSESSTSDSEESDPETAPNQKKKGHSGRESRKHHHPMQQPLIAPPPVMKPPSPTLAPSYPPPSSLDSSHPSLHHPLHPANVFEAVMQLPPDLPPHLAGQTEHCSPPHLNQHALTSPPALHNAMPQQPSRPSNRAAALPTKPARPPSASPPLPPPQPHHQPPAHVHHHHHHHHHAQPPHVLLEDDGPPSPHTGLPSYLQQLHKSQQPPTQSPIHSLLTTVKVQSQAPMAAPAQSMRHHQPLVYPPPSSSASPAPSPASSHIHQMQSPPVVPQQQPAGQAPPPPQQQQQQQQQQQHPALQGTLVSSHQHHVQHQQAKQQQVIQHHHHHHPSPRQQKQETYPGGHLREAPSPLLLHSPQVPPYPGLTHPPSPQSVQPKKQEMRGALVLQPQPLVMKEDKRHSPSVRPEGFSPGMRPEPPKVPEVLKGPSHIQPRPDLKPMDGGRPVRPPDQSLPPQGMPEKEKQKQEPKTPVAPKKDLKIKNMGSWAGLMQKPPVTPTSAGKSTSDSFELFRRQAREKEERERALKHQAEQAERMRREQERMRTREDDDVQDQTRKAHEEARRRQEQQQQQQQQHVQSNLPAAPSPAQSSQPIMDQREMARKREQERRRRQAMAPSIDMNFQSELMEIFEQNLFS.

Disordered regions lie at residues 22-57, 200-243, 274-367, 476-639, 699-941, and 953-1349; these read EGAQ…QPKR, SLGD…HPPA, LANH…DSKT, DEPE…SYEE, CLRK…TQSP, and SQAP…MNFQ. A compositionally biased stretch (pro residues) spans 34 to 49; that stretch reads QPQPQTPMMQTPPPEI. Residues 57–163 form the Bromo 1 domain; that stretch reads RQTNQLQYLL…KLFLQKISEM (107 aa). Residues 219–234 show a composition bias toward pro residues; the sequence is TPTPPAVIRAPTPPQT. A compositionally biased stretch (basic and acidic residues) spans 326 to 342; it reads PRKESGRQIRPIKKTEV. Pro residues predominate over residues 348-358; sequence PAPPDLHPQPA. One can recognise a Bromo 2 domain in the interval 365–474; the sequence is SKTSEQLRYC…DVFEMRFAKM (110 aa). Over residues 481-503 the composition is skewed to pro residues; sequence APAPVPSPAPGPPAPSIKIPPPT. The NPS region stretch occupies residues 503–521; sequence TSSDTSSDSSSDSESSSDS. Over residues 504–516 the composition is skewed to low complexity; it reads SSDTSSDSSSDSE. The segment at 542–597 is BID region; sequence QLAALSQPQPNKPKKKEREKRKEKHKRKEEVEETRKGRIREPPAKKPKKSVQVSGG. The span at 553-568 shows a compositional bias: basic residues; it reads KPKKKEREKRKEKHKR. Residues 569 to 585 show a composition bias toward basic and acidic residues; the sequence is KEEVEETRKGRIREPPA. A compositionally biased stretch (pro residues) spans 606-621; that stretch reads PPPVTRPARPAPPPAP. An NET domain is found at 623–707; it reads ESSEEDTQRC…SCLRKKRKPQ (85 aa). Over residues 628 to 639 the composition is skewed to basic and acidic residues; it reads DTQRCRPMSYEE. Positions 722–737 are enriched in low complexity; it reads SYSSSESESSSESSTS. Positions 750-766 are enriched in basic residues; sequence QKKKGHSGRESRKHHHP. Composition is skewed to pro residues over residues 772 to 793 and 871 to 889; these read IAPP…PPPS and PARP…PHHQ. Residues 893-905 show a composition bias toward basic residues; the sequence is HVHHHHHHHHHAQ. A compositionally biased stretch (polar residues) spans 926–941; it reads YLQQLHKSQQPPTQSP. 4 stretches are compositionally biased toward low complexity: residues 953–963, 977–1006, 1014–1028, and 1041–1050; these read SQAPMAAPAQS, SSAS…QPAG, QQQQ…PALQ, and HQQAKQQQVI. Positions 1061–1361 are C-terminal (CTD) region; it reads RQQKQETYPG…LMEIFEQNLF (301 aa). Residues 1086–1099 show a composition bias toward pro residues; that stretch reads QVPPYPGLTHPPSP. Residues 1186-1207 are compositionally biased toward basic and acidic residues; sequence PEKEKQKQEPKTPVAPKKDLKI. Over residues 1224 to 1234 the composition is skewed to polar residues; it reads PTSAGKSTSDS. The span at 1236–1293 shows a compositional bias: basic and acidic residues; the sequence is ELFRRQAREKEERERALKHQAEQAERMRREQERMRTREDDDVQDQTRKAHEEARRRQE. Residues 1308 to 1319 show a composition bias toward low complexity; the sequence is PAAPSPAQSSQP. Positions 1322 to 1334 are enriched in basic and acidic residues; it reads DQREMARKREQER.

It belongs to the BET family.

Its subcellular location is the nucleus. It is found in the chromosome. In terms of biological role, chromatin reader protein that recognizes and binds acetylated histones and plays a key role in transmission of epigenetic memory across cell divisions and transcription regulation. Remains associated with acetylated chromatin throughout the entire cell cycle and provides epigenetic memory for postmitotic G1 gene transcription by preserving acetylated chromatin status and maintaining high-order chromatin structure. During interphase, plays a key role in regulating the transcription of signal-inducible genes by associating with the P-TEFb complex and recruiting it to promoters. This chain is Bromodomain-containing protein 4B (brd4-b), found in Xenopus laevis (African clawed frog).